The sequence spans 165 residues: LIM domain transcription factor LMO4.2 (165 aa).

2 LIM zinc-binding domains span residues 21–83 (KRCA…LFGN) and 85–147 (GACS…ALIN).

Acts as a positive cofactor of GATA transcription factors to establish the identity of the ventral mesoderm during gastrulation. Down-regulation in the dorsal mesoderm is necessary for the proper formation of this territory since, when present, lmo4 may bind ldb1 and restrict the availability of this cofactor for Spemman organizer transcription factors. At neurula stages, suppresses primary neuron differentiation and modulates gene expression at the Isthmic Organizer of the midbrain-hindbrain boundary. This Xenopus tropicalis (Western clawed frog) protein is LIM domain transcription factor LMO4.2 (lmo4.2).